We begin with the raw amino-acid sequence, 432 residues long: Adenylosuccinate synthetase (432 aa).

GTP is bound by residues 13–19 (GDEGKGK) and 41–43 (GHT). The active-site Proton acceptor is the Asp14. Residues Asp14 and Gly41 each contribute to the Mg(2+) site. Residues 14-17 (DEGK), 39-42 (NAGH), Thr130, Arg144, Gln225, Thr240, and Arg304 each bind IMP. The active-site Proton donor is the His42. 300–306 (ATTGRKR) is a substrate binding site. Residues Arg306, 332-334 (KLD), and 415-417 (STG) each bind GTP.

Belongs to the adenylosuccinate synthetase family. As to quaternary structure, homodimer. It depends on Mg(2+) as a cofactor.

The protein resides in the cytoplasm. It catalyses the reaction IMP + L-aspartate + GTP = N(6)-(1,2-dicarboxyethyl)-AMP + GDP + phosphate + 2 H(+). It participates in purine metabolism; AMP biosynthesis via de novo pathway; AMP from IMP: step 1/2. Its function is as follows. Plays an important role in the de novo pathway of purine nucleotide biosynthesis. Catalyzes the first committed step in the biosynthesis of AMP from IMP. The chain is Adenylosuccinate synthetase from Tolumonas auensis (strain DSM 9187 / NBRC 110442 / TA 4).